The following is a 188-amino-acid chain: NADH-quinone oxidoreductase subunit B 1 (188 aa).

Residues cysteine 39, cysteine 40, cysteine 105, and cysteine 134 each contribute to the [4Fe-4S] cluster site.

Belongs to the complex I 20 kDa subunit family. As to quaternary structure, NDH-1 is composed of 14 different subunits. Subunits NuoB, C, D, E, F, and G constitute the peripheral sector of the complex. The cofactor is [4Fe-4S] cluster.

Its subcellular location is the cell inner membrane. The enzyme catalyses a quinone + NADH + 5 H(+)(in) = a quinol + NAD(+) + 4 H(+)(out). In terms of biological role, NDH-1 shuttles electrons from NADH, via FMN and iron-sulfur (Fe-S) centers, to quinones in the respiratory chain. The immediate electron acceptor for the enzyme in this species is believed to be ubiquinone. Couples the redox reaction to proton translocation (for every two electrons transferred, four hydrogen ions are translocated across the cytoplasmic membrane), and thus conserves the redox energy in a proton gradient. The sequence is that of NADH-quinone oxidoreductase subunit B 1 from Solibacter usitatus (strain Ellin6076).